The sequence spans 512 residues: Protein male-specific lethal-3 (512 aa).

The Chromo domain maps to 11–90 (FHKGEIVLCY…QLQRELAEAA (80 aa)). The segment at 98–175 (YSYKGTPDKP…DGRLKGNRGR (78 aa)) is disordered. Basic and acidic residues predominate over residues 149–169 (RTRDNSGGKRKEKPPSGDGRL). Residues 196 to 500 (QEDRIMMRVS…STALPQEDLQ (305 aa)) form the MRG domain.

As to quaternary structure, component of the male-specific lethal (MSL) histone acetyltransferase complex, composed of mof, mle, msl-1, msl-2 and msl-3 proteins, as well as roX1 and roX2 non-coding RNAs. Component of a maternal MSL subcomplex composed of mof, msl-1 and msl-3. Post-translationally, ubiquitinated by msl-2.

The protein resides in the nucleus. It is found in the chromosome. Its function is as follows. Component of the male-specific lethal (MSL) histone acetyltransferase complex, a multiprotein complex essential for elevating transcription of the single X chromosome in the male (X chromosome dosage compensation). The MSL complex specifically associates with the single X chromosome in males and mediates formation of H4K16ac, promoting a two-fold activation of X chromosome. Acts as a histone reader that specifically recognizes and binds histone H3 trimethylated at 'Lys-36' (H3K36me3) and histone H4 monomethylated at 'Lys-20' (H4K20me1). Within the MSL complex, mediates the spreading of the MSL complex from initiation sites on the male X chromosome to flanking chromatin. Following initial recruitment of the MSL complex to male X chromosome by msl-2, msl-3 binds H3K36me3 and promotes spreading of the MSL complex in cis. In addition to its role in dosage compensation in males, promotes germline stem cell differentiation in females: recognizes and binds H3K36me3, promoting recruitment of the ATAC complex and transcription of genes, such as RpS19b. The chain is Protein male-specific lethal-3 from Drosophila melanogaster (Fruit fly).